Here is a 496-residue protein sequence, read N- to C-terminus: Transactivator/viroplasmin protein (496 aa).

The tract at residues 102–128 is disordered; that stretch reads RPNQGIQIPKKNEDHSSSSSKEEKGIQ. Residues 111–128 are compositionally biased toward basic and acidic residues; it reads KKNEDHSSSSSKEEKGIQ.

The protein belongs to the caulimoviridae viroplasmin family.

Its subcellular location is the host cytoplasm. In terms of biological role, enhances the translation of downstream ORFs on polycistronic mRNAs derived from carnation etched ring virus. The sequence is that of Transactivator/viroplasmin protein from Dianthus caryophyllus (Carnation).